The chain runs to 672 residues: uncharacterized protein (672 aa).

A compositionally biased stretch (basic and acidic residues) spans 1 to 10 (MAKSDGDDPL). The interval 1 to 40 (MAKSDGDDPLRPASPRLRSSRRHSLRYSAYTGGPDPLAPP) is disordered.

This is an uncharacterized protein from Mycobacterium tuberculosis (strain CDC 1551 / Oshkosh).